Here is a 706-residue protein sequence, read N- to C-terminus: Elongation factor G (706 aa).

Residues 15–291 enclose the tr-type G domain; sequence LKTRNIGISA…GVLDYLASPV (277 aa). GTP-binding positions include 24–31, 91–95, and 145–148; these read AHIDSGKT, DTPGH, and NKLD.

This sequence belongs to the TRAFAC class translation factor GTPase superfamily. Classic translation factor GTPase family. EF-G/EF-2 subfamily.

The protein localises to the cytoplasm. Functionally, catalyzes the GTP-dependent ribosomal translocation step during translation elongation. During this step, the ribosome changes from the pre-translocational (PRE) to the post-translocational (POST) state as the newly formed A-site-bound peptidyl-tRNA and P-site-bound deacylated tRNA move to the P and E sites, respectively. Catalyzes the coordinated movement of the two tRNA molecules, the mRNA and conformational changes in the ribosome. This is Elongation factor G from Leptospira borgpetersenii serovar Hardjo-bovis (strain L550).